The chain runs to 436 residues: Histidinol dehydrogenase (436 aa).

Substrate-binding residues include Ser237, Gln259, and His262. Gln259 and His262 together coordinate Zn(2+). Residues Glu327 and His328 each act as proton acceptor in the active site. The substrate site is built by His328, Asp361, Glu415, and His420. Asp361 is a binding site for Zn(2+). His420 is a Zn(2+) binding site.

This sequence belongs to the histidinol dehydrogenase family. It depends on Zn(2+) as a cofactor.

It catalyses the reaction L-histidinol + 2 NAD(+) + H2O = L-histidine + 2 NADH + 3 H(+). Its pathway is amino-acid biosynthesis; L-histidine biosynthesis; L-histidine from 5-phospho-alpha-D-ribose 1-diphosphate: step 9/9. Its function is as follows. Catalyzes the sequential NAD-dependent oxidations of L-histidinol to L-histidinaldehyde and then to L-histidine. This Helicobacter hepaticus (strain ATCC 51449 / 3B1) protein is Histidinol dehydrogenase.